Consider the following 259-residue polypeptide: DNA repair protein RecO (259 aa).

The protein belongs to the RecO family.

Functionally, involved in DNA repair and RecF pathway recombination. The polypeptide is DNA repair protein RecO (Chloroherpeton thalassium (strain ATCC 35110 / GB-78)).